The chain runs to 323 residues: HTH-type transcriptional activator CmpR (323 aa).

The region spanning 4 to 61 (LTLHQLKVFEAAARHSSFTRAAEELYLTQPTVSIQVKQLTKAVGLPLFEQIGKRLYLT) is the HTH lysR-type domain. Residues 21–40 (FTRAAEELYLTQPTVSIQVK) constitute a DNA-binding region (H-T-H motif). A disordered region spans residues 304–323 (IPESTTTDPELDAPQPVVGV).

This sequence belongs to the LysR transcriptional regulatory family.

It localises to the cytoplasm. Functionally, activates transcription of the cmpABCD operon under carbon dioxide-limited conditions. In Synechococcus elongatus (strain ATCC 33912 / PCC 7942 / FACHB-805) (Anacystis nidulans R2), this protein is HTH-type transcriptional activator CmpR (cmpR).